Reading from the N-terminus, the 349-residue chain is Small ribosomal subunit protein uS2 (349 aa).

It belongs to the universal ribosomal protein uS2 family.

The sequence is that of Small ribosomal subunit protein uS2 from Methylobacterium sp. (strain 4-46).